Here is a 623-residue protein sequence, read N- to C-terminus: Heterogeneous nuclear ribonucleoprotein Q (623 aa).

Ala2 is modified (N-acetylalanine). Ser159 carries the phosphoserine modification. 3 RRM domains span residues 162–241, 243–325, and 338–408; these read TEIF…ISVA, NRLF…WADP, and KVLF…FAKP. Lys168 is covalently cross-linked (Glycyl lysine isopeptide (Lys-Gly) (interchain with G-Cter in SUMO2)). N6-acetyllysine is present on Lys221. The residue at position 363 (Lys363) is an N6-acetyllysine. Position 373 is a phosphotyrosine (Tyr373). The segment at 400-561 is interaction with APOBEC1; that stretch reads NIEIVFAKPP…GARGGRGGNV (162 aa). Arg444 carries the asymmetric dimethylarginine; by PRMT1; alternate modification. The residue at position 444 (Arg444) is an Omega-N-methylarginine; by PRMT1; alternate. 6 consecutive repeat copies span residues 448-450, 451-453, 460-464, 469-472, 478-480, and 485-488. Positions 448-559 are 8 X 3 AA repeats of R-G-G; the sequence is RGGRGGYGYP…VRGARGGRGG (112 aa). Residues 460–488 form a 3 X 4 AA repeats of Y-Y-G-Y region; it reads YYGYEDYYDYYGYDYHNYRGGYEDPYYGY. Arg496 carries the post-translational modification Omega-N-methylarginine; by PRMT1. The segment at 497-623 is disordered; that stretch reads GRGGRGARGA…YQDTFGQQWK (127 aa). A 1-4 repeat occupies 498-500; it reads RGG. Low complexity predominate over residues 504-522; sequence RGAAPSRGRGAAPPRGRAG. Residue Arg510 is modified to Asymmetric dimethylarginine; by PRMT1. 4 positions are modified to asymmetric dimethylarginine; by PRMT1; alternate: Arg518, Arg526, Arg536, and Arg539. An omega-N-methylarginine; by PRMT1; alternate mark is found at Arg518, Arg526, Arg536, and Arg539. The tract at residues 518–549 is interaction with SMN; that stretch reads RGRAGYSQRGGPGSARGVRGARGGAQQQRGRG. One copy of the 1-5 repeat lies at 526 to 528; sequence RGG. Repeat copies occupy residues 539–541, 554–556, and 557–559. Gly residues predominate over residues 550–562; the sequence is VRGARGGRGGNVG. The short motif at 564–578 is the Bipartite nuclear localization signal element; the sequence is KRKADGYNQPDSKRR. Residues 580-595 show a composition bias toward polar residues; sequence TNNQNWGSQPIAQQPL. The residue at position 587 (Ser587) is a Phosphoserine. Residue Lys607 forms a Glycyl lysine isopeptide (Lys-Gly) (interchain with G-Cter in SUMO2) linkage. A compositionally biased stretch (polar residues) spans 611–623; that stretch reads QEFYQDTFGQQWK.

As to quaternary structure, isoform 1 is a component of the APOB mRNA editosome complex and interacts with APOBEC1 and A1CF (APOBEC1 complementation factor). Part of a complex associated with the FOS mCRD domain and consisting of PABPC1, PAIP1, CSDE1/UNR, HNRPD and SYNCRIP. Isoform 3 interacts with HNRPR. Interacts with POLR2A hyperphosphorylated C-terminal domain. Isoform 1, isoform 2 and isoform 3 interact with SMN. Isoform 3 interacts through its C-terminal domain with SYT7, SYT8 and SYT9. The non-phosphorylated and phosphorylated forms are colocalized with PAIP1 in polysomes. Interacts with HABP4. Identified in a histone pre-mRNA complex, at least composed of ERI1, LSM11, SLBP, SNRPB, SYNCRIP and YBX1. Identified in the spliceosome C complex. Component of the coding region determinant (CRD)-mediated complex, composed of DHX9, HNRNPU, IGF2BP1, SYNCRIP and YBX1. Identified in a mRNP complex, at least composed of DHX9, DDX3X, ELAVL1, HNRNPU, IGF2BP1, ILF3, PABPC1, PCBP2, PTBP2, STAU1, STAU2, SYNCRIP and YBX1. Identified in a mRNP granule complex, at least composed of ACTB, ACTN4, DHX9, ERG, HNRNPA1, HNRNPA2B1, HNRNPAB, HNRNPD, HNRNPL, HNRNPR, HNRNPU, HSPA1, HSPA8, IGF2BP1, ILF2, ILF3, NCBP1, NCL, PABPC1, PABPC4, PABPN1, RPLP0, RPS3, RPS3A, RPS4X, RPS8, RPS9, SYNCRIP, YBX1 and untranslated mRNAs. Interacts with GTPBP1. Component of the GAIT complex; in humans the complex assembly seems to be a two-step process in which EPRS1 first associates with SYNCRIP to form a pre-GAIT complex which is deficient in GAIT element binding. (Microbial infection) Interacts with minute virus of mice (MVM) NS1 protein. In terms of assembly, (Microbial infection) Interacts with herpes virus 8/HHV-8 protein vIRF-1; this interaction induces ubiquitination and degradation of SYNCRIP. Post-translationally, phosphorylated on tyrosine. The membrane-bound form found in microsomes is phosphorylated in vitro by insulin receptor tyrosine kinase (INSR). Phosphorylation is inhibited upon binding to RNA, whereas the cytoplasmic form is poorly phosphorylated. As to expression, ubiquitously expressed. Detected in heart, brain, pancreas, placenta, spleen, lung, liver, skeletal muscle, kidney, thymus, prostate, uterus, small intestine, colon, peripheral blood and testis.

The protein localises to the cytoplasm. The protein resides in the microsome. It is found in the endoplasmic reticulum. It localises to the nucleus. Its subcellular location is the nucleoplasm. Functionally, heterogenous nuclear ribonucleoprotein (hnRNP) implicated in mRNA processing mechanisms. Component of the CRD-mediated complex that promotes MYC mRNA stability. Isoform 1, isoform 2 and isoform 3 are associated in vitro with pre-mRNA, splicing intermediates and mature mRNA protein complexes. Isoform 1 binds to apoB mRNA AU-rich sequences. Isoform 1 is part of the APOB mRNA editosome complex and may modulate the postranscriptional C to U RNA-editing of the APOB mRNA through either by binding to A1CF (APOBEC1 complementation factor), to APOBEC1 or to RNA itself. May be involved in translationally coupled mRNA turnover. Implicated with other RNA-binding proteins in the cytoplasmic deadenylation/translational and decay interplay of the FOS mRNA mediated by the major coding-region determinant of instability (mCRD) domain. Interacts in vitro preferentially with poly(A) and poly(U) RNA sequences. Isoform 3 may be involved in cytoplasmic vesicle-based mRNA transport through interaction with synaptotagmins. Component of the GAIT (gamma interferon-activated inhibitor of translation) complex which mediates interferon-gamma-induced transcript-selective translation inhibition in inflammation processes. Upon interferon-gamma activation assembles into the GAIT complex which binds to stem loop-containing GAIT elements in the 3'-UTR of diverse inflammatory mRNAs (such as ceruplasmin) and suppresses their translation; seems not to be essential for GAIT complex function. The chain is Heterogeneous nuclear ribonucleoprotein Q (SYNCRIP) from Homo sapiens (Human).